Here is a 124-residue protein sequence, read N- to C-terminus: Alpha-amylase inhibitor 0.53 (124 aa).

4 disulfides stabilise this stretch: C20–C41, C28–C83, C42–C99, and C54–C115.

The protein belongs to the protease inhibitor I6 (cereal trypsin/alpha-amylase inhibitor) family. As to quaternary structure, homodimer. In terms of processing, the disulfide bonds are essential for the inhibitor activity. As to expression, endosperm.

The protein localises to the secreted. Functionally, alpha-amylase inhibitor. The chain is Alpha-amylase inhibitor 0.53 from Triticum aestivum (Wheat).